Reading from the N-terminus, the 308-residue chain is Taste receptor type 2 member 43 (308 aa).

Residue M1 is a topological domain, extracellular. A helical membrane pass occupies residues 2–22; the sequence is ITFLPIIFSILVVFTFVIGNF. The Cytoplasmic segment spans residues 23 to 46; the sequence is ANGFIALVNSIEWVKRQKISFADQ. The chain crosses the membrane as a helical span at residues 47–67; the sequence is ILTALAVSRVGLLWILLLNWY. The Extracellular segment spans residues 68-86; the sequence is STVLNPAFYSVEVRTIAYN. The helical transmembrane segment at 87-107 threads the bilayer; that stretch reads LWAVINHFSNWLATSLSIFYL. Residues 108–126 lie on the Cytoplasmic side of the membrane; the sequence is LKIANFSNLIFLHLRRRVK. A helical membrane pass occupies residues 127–147; it reads SVVLVILWGPLLFLVCHLFVV. Residues 148-178 lie on the Extracellular side of the membrane; it reads NMNEIIQTKEYEGNMTWKSKLRSAMYLSNTT. N161 and N176 each carry an N-linked (GlcNAc...) asparagine glycan. Residues 179–199 form a helical membrane-spanning segment; the sequence is VTILANLVPFILTLISFLLLI. At 200 to 229 the chain is on the cytoplasmic side; the sequence is CSLCKHLKKMQLRDKGSQDPSTKVHIKALQ. The helical transmembrane segment at 230–249 threads the bilayer; sequence TVISLSLCAIYFLSIMISSW. The Extracellular portion of the chain corresponds to 250-258; the sequence is SLGRVENKA. A helical transmembrane segment spans residues 259–279; sequence IFMFCKAIRFSYPSAHAFILI. Over 280–308 the chain is Cytoplasmic; that stretch reads WGNKKLKQTLLSVLWNVRYCVKGQKLQSP.

Belongs to the G-protein coupled receptor T2R family.

The protein resides in the membrane. Its subcellular location is the cell projection. It localises to the cilium membrane. Functionally, gustducin-coupled receptor immplicated in the perception of bitter compounds in the oral cavity and the gastrointestinal tract. Signals through PLCB2 and the calcium-regulated cation channel TRPM5. Activated by the sulfonyl amide sweeteners saccharin and acesulfame K. In airway epithelial cells, binding of bitter compounds increases the intracellular calcium ion concentration and stimulates ciliary beat frequency. May act as chemosensory receptors in airway epithelial cells to detect and eliminate potential noxious agents from the airways. The chain is Taste receptor type 2 member 43 (TAS2R43) from Macaca mulatta (Rhesus macaque).